A 430-amino-acid chain; its full sequence is MSSVVVVGTQWGDEGKGKITDFLSENAEVIARYQGGDNAGHTIKFDGVTYKLHLIPSGIFYKEKISVIGNGVVVNPKSLVKELAYLKENNVATDNLRISDRAHVILPYHIKLDQLQEDAKGENKIGTTIKGIGPAYMDKAARVGIRIADLLDKEIFAERLQINLEEKNRQFVKMFDSEAIEFDDIFEEYYEYGQQIKQYVTDTSVILNDALDAGKRVLFEGAQGVMLDIDQGTYPFVTSSNPVAGGVTIGSGVGPSKINKVVGVCKAYTSRVGDGPFPTELFDETGETIRRVGKEYGTTTGRPRRVGWFDSVVMRHSKRVSGITNLSLNSIDVLSGLETVKICTAYELDGELIYHYPASLKELSRCKPVYEELPGWSEDITGCKTLADLPANARNYVHRISELVGVRISTFSVGPDRNQTNVLESVWAQI.

Residues G12–K18 and G40–T42 each bind GTP. Residue D13 is the Proton acceptor of the active site. Residues D13 and G40 each coordinate Mg(2+). IMP contacts are provided by residues D13–K16, N38–H41, T128, R142, Q223, T238, and R302. The Proton donor role is filled by H41. A substrate-binding site is contributed by T298–R304. Residues R304, S330 to D332, and S412 to G414 each bind GTP.

Belongs to the adenylosuccinate synthetase family. Homodimer. Requires Mg(2+) as cofactor.

It localises to the cytoplasm. The catalysed reaction is IMP + L-aspartate + GTP = N(6)-(1,2-dicarboxyethyl)-AMP + GDP + phosphate + 2 H(+). The protein operates within purine metabolism; AMP biosynthesis via de novo pathway; AMP from IMP: step 1/2. Its function is as follows. Plays an important role in the de novo pathway of purine nucleotide biosynthesis. Catalyzes the first committed step in the biosynthesis of AMP from IMP. The polypeptide is Adenylosuccinate synthetase (Enterococcus faecalis (strain ATCC 700802 / V583)).